The following is a 177-amino-acid chain: Ribulose bisphosphate carboxylase small subunit, chloroplastic (177 aa).

Residues 1–55 (MASLMSNAAVVTASTAAQANMVAPFSGLKSTSAFPVSRKSNVDITSLATNGGRVN) constitute a chloroplast transit peptide.

It belongs to the RuBisCO small chain family. In terms of assembly, heterohexadecamer of 8 large and 8 small subunits.

It is found in the plastid. It localises to the chloroplast. In terms of biological role, ruBisCO catalyzes two reactions: the carboxylation of D-ribulose 1,5-bisphosphate, the primary event in carbon dioxide fixation, as well as the oxidative fragmentation of the pentose substrate. Both reactions occur simultaneously and in competition at the same active site. Although the small subunit is not catalytic it is essential for maximal activity. In Silene latifolia subsp. alba (White campion), this protein is Ribulose bisphosphate carboxylase small subunit, chloroplastic.